Consider the following 302-residue polypeptide: Glutamate/aspartate import solute-binding protein (302 aa).

The signal sequence occupies residues 1–22; it reads MQLRKPATAILALALSAGLAQA.

This sequence belongs to the bacterial solute-binding protein 3 family. The complex is composed of two ATP-binding proteins (GltL), two transmembrane proteins (GltJ and GltK) and a solute-binding protein (GltI).

The protein localises to the periplasm. Its function is as follows. Part of the ABC transporter complex GltIJKL involved in glutamate and aspartate uptake. Binds to both glutamate and aspartate. The polypeptide is Glutamate/aspartate import solute-binding protein (gltI) (Escherichia coli (strain K12)).